Reading from the N-terminus, the 595-residue chain is Pentatricopeptide repeat-containing protein At4g21065 (595 aa).

9 PPR repeats span residues 84–118 (NVFI…GLVE), 120–154 (DTHT…GFGS), 155–185 (LIYV…MPEK), 186–220 (DLVA…GIKP), 221–255 (DGFT…GLTR), 256–290 (NLHS…NSVS), 291–317 (WTSL…MEST), 323–353 (CEIT…MREE), and 359–389 (RIEH…MPMQ). A type E motif region spans residues 394 to 469 (IWRTLLGACT…VPGHSLVEVG (76 aa)). The type E(+) motif stretch occupies residues 470-500 (NRVHEFLMGDKSHPQSDAIYAKLKEMTGRLR). A type DYW motif region spans residues 501-595 (SEGYVPQISN…NGSCSCQDYW (95 aa)).

It belongs to the PPR family. PCMP-H subfamily.

In Arabidopsis thaliana (Mouse-ear cress), this protein is Pentatricopeptide repeat-containing protein At4g21065 (PCMP-H28).